Consider the following 442-residue polypeptide: tRNA modification GTPase MnmE (442 aa).

(6S)-5-formyl-5,6,7,8-tetrahydrofolate is bound by residues Arg27, Glu84, and Lys124. Residues 221 to 366 (GLHVVIVGAP…LLDALQAFAE (146 aa)) enclose the TrmE-type G domain. GTP is bound by residues 231–236 (NAGKSS), 250–256 (SEEAGTT), and 275–278 (DTAG). Ser235 and Thr256 together coordinate Mg(2+). A (6S)-5-formyl-5,6,7,8-tetrahydrofolate-binding site is contributed by Lys442.

This sequence belongs to the TRAFAC class TrmE-Era-EngA-EngB-Septin-like GTPase superfamily. TrmE GTPase family. In terms of assembly, homodimer. Heterotetramer of two MnmE and two MnmG subunits. It depends on K(+) as a cofactor.

The protein localises to the cytoplasm. Its function is as follows. Exhibits a very high intrinsic GTPase hydrolysis rate. Involved in the addition of a carboxymethylaminomethyl (cmnm) group at the wobble position (U34) of certain tRNAs, forming tRNA-cmnm(5)s(2)U34. The sequence is that of tRNA modification GTPase MnmE from Brucella melitensis biotype 1 (strain ATCC 23456 / CCUG 17765 / NCTC 10094 / 16M).